Here is an 828-residue protein sequence, read N- to C-terminus: Protein kintoun (828 aa).

5 disordered regions span residues 1–31 (MSGS…DEPI), 223–250 (KNPT…EGEP), 383–424 (DSGV…PTSN), 556–668 (APVQ…HRGI), and 741–828 (KKNQ…EDLI). The segment covering 9 to 22 (RNKHSKGNLKHNNN) has biased composition (basic residues). A Phosphoserine modification is found at serine 384. A compositionally biased stretch (acidic residues) spans 395–414 (PVEEEEDGEDEIEAEEEEEE). Residues 556 to 573 (APVQEDKPGDIQFKRNDQ) are compositionally biased toward basic and acidic residues. Positions 591 to 601 (EREEGEIEEAE) are enriched in acidic residues. A compositionally biased stretch (basic residues) spans 606–620 (KKSASKKQRGKRNKK). The segment covering 625-641 (SESACVSLPTSVDSQPM) has biased composition (polar residues). Residues 741-755 (KKNQKRRDCKLRAQQ) show a composition bias toward basic residues. Serine 759 is subject to Phosphoserine. Over residues 788 to 808 (DSGLDLTRHNKKRELAEEADN) the composition is skewed to basic and acidic residues. The span at 815–828 (EMDDDDDDEDEDLI) shows a compositional bias: acidic residues.

This sequence belongs to the PIH1 family. Kintoun subfamily. As to quaternary structure, interacts with Pp1alpha-96A, Pp1-87B, Pp1-13C and flw.

The protein localises to the cytoplasm. Required for cytoplasmic pre-assembly of axonemal dyneins, thereby playing a central role in motility in cilia and flagella. Involved in pre-assembly of dynein arm complexes in the cytoplasm before intraflagellar transport loads them for the ciliary compartment. This Drosophila willistoni (Fruit fly) protein is Protein kintoun.